The primary structure comprises 348 residues: Anthranilate phosphoribosyltransferase (348 aa).

5-phospho-alpha-D-ribose 1-diphosphate is bound by residues glycine 80, 83-84 (GD), threonine 88, 90-93 (NVST), 108-116 (KHGNRSVSS), and serine 120. Position 80 (glycine 80) interacts with anthranilate. A Mg(2+)-binding site is contributed by serine 92. Asparagine 111 serves as a coordination point for anthranilate. Arginine 166 provides a ligand contact to anthranilate. 2 residues coordinate Mg(2+): aspartate 224 and glutamate 225.

It belongs to the anthranilate phosphoribosyltransferase family. Homodimer. It depends on Mg(2+) as a cofactor.

It carries out the reaction N-(5-phospho-beta-D-ribosyl)anthranilate + diphosphate = 5-phospho-alpha-D-ribose 1-diphosphate + anthranilate. The protein operates within amino-acid biosynthesis; L-tryptophan biosynthesis; L-tryptophan from chorismate: step 2/5. Catalyzes the transfer of the phosphoribosyl group of 5-phosphorylribose-1-pyrophosphate (PRPP) to anthranilate to yield N-(5'-phosphoribosyl)-anthranilate (PRA). The protein is Anthranilate phosphoribosyltransferase of Sorangium cellulosum (strain So ce56) (Polyangium cellulosum (strain So ce56)).